We begin with the raw amino-acid sequence, 819 residues long: Leucine--tRNA ligase (819 aa).

Residues 51-61 (PYPSGNLHIGH) carry the 'HIGH' region motif. The 'KMSKS' region signature appears at 586 to 590 (KMSKS). Lysine 589 lines the ATP pocket.

The protein belongs to the class-I aminoacyl-tRNA synthetase family.

It localises to the cytoplasm. It catalyses the reaction tRNA(Leu) + L-leucine + ATP = L-leucyl-tRNA(Leu) + AMP + diphosphate. This Deinococcus geothermalis (strain DSM 11300 / CIP 105573 / AG-3a) protein is Leucine--tRNA ligase.